Here is a 102-residue protein sequence, read N- to C-terminus: MSNSCDLTGHGWQNGNMVSHSNRKTKKRFMPNLQRVTVFSDVLKQKFRFKVSAKTIRTIDFKGGLDDFLRNTKNSKLSKSALVLKKRIMKKVSGDGTNDRKA.

Residues 1–20 (MSNSCDLTGHGWQNGNMVSH) are compositionally biased toward polar residues. The tract at residues 1–27 (MSNSCDLTGHGWQNGNMVSHSNRKTKK) is disordered.

It belongs to the bacterial ribosomal protein bL28 family.

The sequence is that of Large ribosomal subunit protein bL28 from Neorickettsia sennetsu (strain ATCC VR-367 / Miyayama) (Ehrlichia sennetsu).